A 706-amino-acid polypeptide reads, in one-letter code: Double-strand break repair protein MRE11 (706 aa).

An N-acetylserine modification is found at Ser-2. The residue at position 2 (Ser-2) is a Phosphoserine. The Mn(2+) site is built by Asp-20, His-22, and Asp-60. An interaction with NBN region spans residues 87 to 117; sequence RPVQFEVISDQSVNFGFSKFPWVNYQDGNLN. Position 128 (Asn-128) interacts with Mn(2+). The active-site Proton donor is His-129. The Mn(2+) site is built by His-217, His-245, and His-247. A Glycyl lysine isopeptide (Lys-Gly) (interchain with G-Cter in SUMO2) cross-link involves residue Lys-255. Residue Ser-275 is modified to Phosphoserine. Lys-282 participates in a covalent cross-link: Glycyl lysine isopeptide (Lys-Gly) (interchain with G-Cter in UFM1). Residue Lys-339 forms a Glycyl lysine isopeptide (Lys-Gly) (interchain with G-Cter in ubiquitin) linkage. Glycyl lysine isopeptide (Lys-Gly) (interchain with G-Cter in SUMO) cross-links involve residues Lys-384 and Lys-468. A Glycyl lysine isopeptide (Lys-Gly) (interchain with G-Cter in ubiquitin) cross-link involves residue Lys-481. Positions 505–514 are enriched in basic and acidic residues; sequence FRESRQRNTN. The tract at residues 505–706 is disordered; it reads FRESRQRNTN…SSSCPRRNRR (202 aa). The span at 531–541 shows a compositional bias: polar residues; it reads RSQSETSTSAF. Positions 569 to 579 are enriched in basic residues; it reads GRGRGRGRRGA. 9 positions are modified to asymmetric dimethylarginine: Arg-570, Arg-572, Arg-574, Arg-576, Arg-577, Arg-580, Arg-587, Arg-592, and Arg-594. Residues 570–594 carry the GAR motif; that stretch reads RGRGRGRRGARGQSSAPRGGSQRGR. Residues 580 to 589 are compositionally biased toward low complexity; it reads RGQSSAPRGG. Polar residues predominate over residues 603-617; the sequence is RGRSSKATSSTSRNM. 3 positions are modified to phosphoserine: Ser-618, Ser-640, and Ser-648. Over residues 643–653 the composition is skewed to acidic residues; that stretch reads IEVDDSDEDDI. Polar residues predominate over residues 655–679; it reads PTNSRADQRWSGTTSSKRMSQSQTA. Lys-671 is modified (N6-lactoyllysine). Residues Ser-674, Ser-676, Ser-686, and Ser-699 each carry the phosphoserine modification. Over residues 684-694 the composition is skewed to acidic residues; it reads FESDEDDDDDP.

This sequence belongs to the MRE11/RAD32 family. As to quaternary structure, component of the MRN complex composed of two heterodimers RAD50 and MRE11 associated with a single NBN. The MRN complexes dimerize on DNA to form joined MRN-MRN oligomers required for DNA double-strand break repair. As part of the MRN complex, interacts with MCM9; the interaction recruits the complex to DNA repair sites. Component of the BASC complex, at least composed of BRCA1, MSH2, MSH6, MLH1, ATM, BLM, RAD50, MRE11 and NBN. Found in a complex with TERF2. Interacts with DCLRE1C/Artemis and DCLRE1B/Apollo. Interacts with ATF2. Interacts with EXD2. Interacts with MRNIP. Interacts with SAMHD1; leading to stimulate 3'-5' exonuclease activity. Interacts (when ubiquitinated) with UBQLN4 (via its UBA domain). Interacts with CYREN (via XLF motif). Interacts with GFI1; promoting methylation by PRMT1. Interacts with DYNLL1; inhibiting the activity of MRE11. Interacts with C1QBP and RAD50; interaction takes place in absence of DNA damage to form the MRC (MRE11-RAD50-C1QBP) complex that inhibits the activity of MRE11. Interacts with AGER/RAGE; AGER is recruited to DNA double-strand break sites where it enhances MRE11 endonuclease activity to promote DNA repair. Mn(2+) is required as a cofactor. In terms of processing, phosphorylated by ATM at Ser-674 and Ser-676 in response to DNA damage, promoting MRE11 activity: phosphorylation activates MRE11 by preventing the interaction between MRE11 and the C1QBP inhibitor. Phosphorylation at Ser-648 by PLK1 primes for phosphorylation at Ser-686 by CK2, inhibiting recruitment of the MRN complex to DNA damage sites. Post-translationally, asymmetric dimethylation by PRMT1 promotes MRE11 exonuclease activity. Lactylation at Lys-671 by CREBBP/CBP in response to DNA damage promotes DNA binding and MRE11 activity. In terms of processing, acetylated on lysine residues by KAT2A /GCN5. Post-translationally, ubiquitinated following DNA damage. Ubiquitination triggers interaction with UBQLN4, leading to MRE11 removal from chromatin and degradation by the proteasome. Ubiquitinated at Lys-339 and Lys-481 by RNF126 via 'Lys-27'- and 'Lys-29'-linked polyubiquitin chains, promoting the exonuclease activity of MRE11. SUMOylated by PIAS1, stabilizing MRE11 on chromatin during end resection. DeSUMOylated by SENP3 following removal from DNA double-strand breaks (DSBs). In terms of processing, ufmylation at Lys-282 promotes MRE11 activity and is required for activation of the ATM and ATR kinases by the MRN complex.

The protein resides in the nucleus. The protein localises to the chromosome. It localises to the telomere. Interaction with SAMHD1 stimulates the double-strand-specific 3'-5' exonuclease activity. RBBP8/CtIP specifically promotes the endonuclease activity to clear protein-DNA adducts and generate clean double-strand break ends. DYNLL1-binding inhibits the activity of MRE11. MRE11 activity is inhibited by C1QBP: in absence of DNA damage, C1QBP interacts with unphosphorylated MRE11, preventing formation and activity of the MRN complex. Functionally, core component of the MRN complex, which plays a central role in double-strand break (DSB) repair, DNA recombination, maintenance of telomere integrity and meiosis. The MRN complex is involved in the repair of DNA double-strand breaks (DSBs) via homologous recombination (HR), an error-free mechanism which primarily occurs during S and G2 phases. The complex (1) mediates the end resection of damaged DNA, which generates proper single-stranded DNA, a key initial steps in HR, and is (2) required for the recruitment of other repair factors and efficient activation of ATM and ATR upon DNA damage. Within the MRN complex, MRE11 possesses both single-strand endonuclease activity and double-strand-specific 3'-5' exonuclease activity. After DSBs, MRE11 is loaded onto DSBs sites and cleaves DNA by cooperating with RBBP8/CtIP to initiate end resection. MRE11 first endonucleolytically cleaves the 5' strand at DNA DSB ends to prevent non-homologous end joining (NHEJ) and licence HR. It then generates a single-stranded DNA gap via 3' to 5' exonucleolytic degradation to create entry sites for EXO1- and DNA2-mediated 5' to 3' long-range resection, which is required for single-strand invasion and recombination. RBBP8/CtIP specifically promotes the endonuclease activity of MRE11 to clear protein-DNA adducts and generate clean double-strand break ends. MRE11 endonuclease activity is also enhanced by AGER/RAGE. The MRN complex is also required for DNA damage signaling via activation of the ATM and ATR kinases: the nuclease activity of MRE11 is not required to activate ATM and ATR. The MRN complex is also required for the processing of R-loops. The MRN complex is involved in the activation of the cGAS-STING pathway induced by DNA damage during tumorigenesis: the MRN complex acts by displacing CGAS from nucleosome sequestration, thereby activating it. In telomeres the MRN complex may modulate t-loop formation. The protein is Double-strand break repair protein MRE11 of Mus musculus (Mouse).